The following is a 276-amino-acid chain: Krueppel homolog 2 (276 aa).

Positions Met1–Val37 are disordered. The segment covering Ser18–Gln35 has biased composition (low complexity). Ser22 carries the phosphoserine modification. The next 3 membrane-spanning stretches (helical) occupy residues Ala53 to Phe73, Leu125 to Val145, and Ile181 to Phe201.

This sequence belongs to the PER33/POM33 family.

Its subcellular location is the membrane. Functionally, member of the dosage-dependent hierarchy effective upon white gene expression. This is Krueppel homolog 2 (Kr-h2) from Drosophila melanogaster (Fruit fly).